The sequence spans 343 residues: tRNA N6-adenosine threonylcarbamoyltransferase (343 aa).

The Fe cation site is built by His-120 and His-124. Substrate is bound by residues 142–146 (VVSGG), Asp-175, Gly-188, Asp-192, and Asn-281. Residue Asp-310 coordinates Fe cation.

This sequence belongs to the KAE1 / TsaD family. The cofactor is Fe(2+).

The protein localises to the cytoplasm. It catalyses the reaction L-threonylcarbamoyladenylate + adenosine(37) in tRNA = N(6)-L-threonylcarbamoyladenosine(37) in tRNA + AMP + H(+). In terms of biological role, required for the formation of a threonylcarbamoyl group on adenosine at position 37 (t(6)A37) in tRNAs that read codons beginning with adenine. Is involved in the transfer of the threonylcarbamoyl moiety of threonylcarbamoyl-AMP (TC-AMP) to the N6 group of A37, together with TsaE and TsaB. TsaD likely plays a direct catalytic role in this reaction. This Bacillus anthracis protein is tRNA N6-adenosine threonylcarbamoyltransferase.